A 324-amino-acid chain; its full sequence is Bis(5'-nucleosyl)-tetraphosphatase, symmetrical (324 aa).

The interval 269-324 is disordered; it reads PGREVTAPATAPRAPRRPRERQGRQRARGGRGGGNGNGNGGNAAAPAAAPGDAPQE. Positions 282-297 are enriched in basic residues; sequence APRRPRERQGRQRARG. A compositionally biased stretch (gly residues) spans 298–309; sequence GRGGGNGNGNGG. The segment covering 310-324 has biased composition (low complexity); that stretch reads NAAAPAAAPGDAPQE.

Belongs to the Ap4A hydrolase family.

The enzyme catalyses P(1),P(4)-bis(5'-adenosyl) tetraphosphate + H2O = 2 ADP + 2 H(+). Hydrolyzes diadenosine 5',5'''-P1,P4-tetraphosphate to yield ADP. The polypeptide is Bis(5'-nucleosyl)-tetraphosphatase, symmetrical (Xanthomonas campestris pv. campestris (strain ATCC 33913 / DSM 3586 / NCPPB 528 / LMG 568 / P 25)).